A 456-amino-acid polypeptide reads, in one-letter code: Putative F-box/LRR-repeat protein At5g02700 (456 aa).

In terms of domain architecture, F-box spans Ala-26–Thr-72. 5 LRR repeats span residues Val-126 to Leu-154, Phe-177 to Thr-202, Leu-206 to Gln-224, Leu-271 to Glu-300, and Phe-330 to Thr-355.

The polypeptide is Putative F-box/LRR-repeat protein At5g02700 (Arabidopsis thaliana (Mouse-ear cress)).